The chain runs to 142 residues: Small ribosomal subunit protein uS12z (142 aa).

A Hydroxyproline modification is found at Pro61.

This sequence belongs to the universal ribosomal protein uS12 family.

This Arabidopsis thaliana (Mouse-ear cress) protein is Small ribosomal subunit protein uS12z (RPS23A).